Here is a 405-residue protein sequence, read N- to C-terminus: Phosphopentomutase (405 aa).

6 residues coordinate Mn(2+): Asp-10, Asp-303, His-308, Asp-344, His-345, and His-356.

It belongs to the phosphopentomutase family. The cofactor is Mn(2+).

The protein resides in the cytoplasm. It carries out the reaction 2-deoxy-alpha-D-ribose 1-phosphate = 2-deoxy-D-ribose 5-phosphate. The enzyme catalyses alpha-D-ribose 1-phosphate = D-ribose 5-phosphate. The protein operates within carbohydrate degradation; 2-deoxy-D-ribose 1-phosphate degradation; D-glyceraldehyde 3-phosphate and acetaldehyde from 2-deoxy-alpha-D-ribose 1-phosphate: step 1/2. Its function is as follows. Isomerase that catalyzes the conversion of deoxy-ribose 1-phosphate (dRib-1-P) and ribose 1-phosphate (Rib-1-P) to deoxy-ribose 5-phosphate (dRib-5-P) and ribose 5-phosphate (Rib-5-P), respectively. The sequence is that of Phosphopentomutase from Shewanella loihica (strain ATCC BAA-1088 / PV-4).